The following is a 331-amino-acid chain: D-lactate dehydrogenase (331 aa).

NAD(+)-binding positions include 156–157 (RI), Asp176, 206–207 (MP), 233–235 (TAR), and Asp259. Arg235 is an active-site residue. Residue Glu264 is part of the active site. His296 acts as the Proton donor in catalysis.

The protein belongs to the D-isomer specific 2-hydroxyacid dehydrogenase family.

It carries out the reaction (R)-lactate + NAD(+) = pyruvate + NADH + H(+). The polypeptide is D-lactate dehydrogenase (ldhD) (Treponema pallidum (strain Nichols)).